Reading from the N-terminus, the 368-residue chain is Acetyl-coenzyme A carboxylase carboxyl transferase subunit alpha (368 aa).

In terms of domain architecture, CoA carboxyltransferase C-terminal spans 44–294 (EIDNKLQEIY…RKSIEKNLNE (251 aa)).

The protein belongs to the AccA family. As to quaternary structure, acetyl-CoA carboxylase is a heterohexamer composed of biotin carboxyl carrier protein (AccB), biotin carboxylase (AccC) and two subunits each of ACCase subunit alpha (AccA) and ACCase subunit beta (AccD).

It is found in the cytoplasm. It carries out the reaction N(6)-carboxybiotinyl-L-lysyl-[protein] + acetyl-CoA = N(6)-biotinyl-L-lysyl-[protein] + malonyl-CoA. It participates in lipid metabolism; malonyl-CoA biosynthesis; malonyl-CoA from acetyl-CoA: step 1/1. In terms of biological role, component of the acetyl coenzyme A carboxylase (ACC) complex. First, biotin carboxylase catalyzes the carboxylation of biotin on its carrier protein (BCCP) and then the CO(2) group is transferred by the carboxyltransferase to acetyl-CoA to form malonyl-CoA. The chain is Acetyl-coenzyme A carboxylase carboxyl transferase subunit alpha from Pelagibacter ubique (strain HTCC1062).